The chain runs to 336 residues: Glycerol-3-phosphate dehydrogenase [NAD(P)+] (336 aa).

4 residues coordinate NADPH: Ser13, Trp14, Arg34, and Lys108. Sn-glycerol 3-phosphate contacts are provided by Lys108, Gly138, and Ser140. Ala142 is a binding site for NADPH. Residues Lys193, Asp246, Ser256, Arg257, and Asn258 each coordinate sn-glycerol 3-phosphate. The active-site Proton acceptor is the Lys193. Arg257 lines the NADPH pocket. Residues Val281 and Glu283 each contribute to the NADPH site.

The protein belongs to the NAD-dependent glycerol-3-phosphate dehydrogenase family.

It localises to the cytoplasm. It carries out the reaction sn-glycerol 3-phosphate + NAD(+) = dihydroxyacetone phosphate + NADH + H(+). The enzyme catalyses sn-glycerol 3-phosphate + NADP(+) = dihydroxyacetone phosphate + NADPH + H(+). It functions in the pathway membrane lipid metabolism; glycerophospholipid metabolism. Functionally, catalyzes the reduction of the glycolytic intermediate dihydroxyacetone phosphate (DHAP) to sn-glycerol 3-phosphate (G3P), the key precursor for phospholipid synthesis. The chain is Glycerol-3-phosphate dehydrogenase [NAD(P)+] from Carboxydothermus hydrogenoformans (strain ATCC BAA-161 / DSM 6008 / Z-2901).